A 77-amino-acid chain; its full sequence is Acyl carrier protein (77 aa).

The Carrier domain occupies 1–76 (MATFDDVKAV…DVVNYIDNLK (76 aa)). At Ser-36 the chain carries O-(pantetheine 4'-phosphoryl)serine.

The protein belongs to the acyl carrier protein (ACP) family. In terms of processing, 4'-phosphopantetheine is transferred from CoA to a specific serine of apo-ACP by AcpS. This modification is essential for activity because fatty acids are bound in thioester linkage to the sulfhydryl of the prosthetic group.

The protein localises to the cytoplasm. It functions in the pathway lipid metabolism; fatty acid biosynthesis. Functionally, carrier of the growing fatty acid chain in fatty acid biosynthesis. The chain is Acyl carrier protein from Campylobacter jejuni subsp. doylei (strain ATCC BAA-1458 / RM4099 / 269.97).